The following is a 1907-amino-acid chain: MAPTWSPSVVSVVGPVGLFLVLLARGCLAEEPPRFIREPKDQIGVSGGVASFVCQATGDPKPRVTWNKKGKKVNSQRFETIDFDESSGAVLRIQPLRTPRDENVYECVAQNSVGEITIHAKLTVLREDQLPPGFPNIDMGPQLKVVERTRTATMLCAASGNPDPEITWFKDFLPVDPSASNGRIKQLRSGALQIESSEETDQGKYECVATNSAGVRYSSPANLYVRVRRVAPRFSILPMSHEIMPGGNVNITCVAVGSPMPYVKWMQGAEDLTPEDDMPVGRNVLELTDVKDSANYTCVAMSSLGVIEAVAQITVKSLPKAPGTPVVTENTATSITVTWDSGNPDPVSYYVIEYKSKSQDGPYQIKEDITTTRYSIGGLSPNSEYEIWVSAVNSIGQGPPSESVVTRTGEQAPASAPRNVQARMLSATTMIVQWEEPVEPNGLIRGYRVYYTMEPEHPVGNWQKHNVDDSLLTTVGSLLEDETYTVRVLAFTSVGDGPLSDPIQVKTQQGVPGQPMNLRAEAKSETSIGLSWSAPRQESVIKYELLFREGDRGREVGRTFDPTTAFVVEDLKPNTEYAFRLAARSPQGLGAFTAVVRQRTLQAKPSAPPQDVKCTSLRSTAILVSWRPPPPETHNGALVGYSVRYRPLGSEDPDPKEVNNIPPTTTQILLEALEKWTEYRVTAVAYTEVGPGPESSPVVVRTDEDVPSAPPRKVEAEALNATAIRVLWRSPTPGRQHGQIRGYQVHYVRMEGAEARGPPRIKDIMLADAQEMVITNLQPETAYSITVAAYTMKGDGARSKPKVVVTKGAVLGRPTLSVQQTPEGSLLARWEPPADAAEDPVLGYRLQFGREDAAPATLELAAWERRFAAPAHKGATYVFRLAARGRAGLGEEAAAALSIPEDAPRGFPQILGAAGNVSAGSVLLRWLPPVPAERNGAIIKYTVSVREAGAPGPATETELAAAAQPGAETALTLRGLRPETAYELRVRAHTRRGPGPFSPPLRYRLARDPVSPKNFKVKMIMKTSVLLSWEFPDNYNSPTPYKIQYNGLTLDVDGRTTKKLITHLKPHTFYNFVLTNRGSSLGGLQQTVTARTAFNMLSGKPSVAPKPDNDGFIVVYLPDGQSPVTVQNYFIVMVPLRKSRGGQFPVLLGSPEDMDLEELIQDISRLQRRSLRHSRQLEVPRPYIAARFSILPAVFHPGNQKQYGGFDNRGLEPGHRYVLFVLAVLQKNEPTFAASPFSDPFQLDNPDPQPIVDGEEGLIWVIGPVLAVVFIICIVIAILLYKNKPDSKRKDSEPRTKCLLNNADLAPHHPKDPVEMRRINFQTPGMLSHPPIPITDMAEHMERLKANDSLKLSQEYESIDPGQQFTWEHSNLEANKPKNRYANVIAYDHSRVILQPLEGIMGSDYINANYVDGYRRQNAYIATQGPLPETFGDFWRMVWEQRSATVVMMTRLEEKSRIKCDQYWPNRGTETYGFIQVTLLDTMELATFCVRTFSLHKNGSSEKREVRHFQFTAWPDHGVPEYPTPFLAFLRRVKTCNPPDAGPIVVHCSAGVGRTGCFIVIDAMLERIKTEKTVDVYGHVTLMRSQRNYMVQTEDQYGFIHEALLEAVGCGNTEVPARSLYTYIQKLAQVEPGEHVTGMELEFKRLASSKAHTSRFITASLPCNKFKNRLVNILPYESSRVCLQPIRGVEGSDYINASFIDGYRQQKAYIATQGPLAETTEDFWRALWENNSTIVVMLTKLREMGREKCHQYWPAERSARYQYFVVDPMAEYNMPQYILREFKVTDARDGQSRTVRQFQFTDWPEQGAPKSGEGFIDFIGQVHKTKEQFGQDGPISVHCSAGVGRTGVFITLSIVLERMRYEGVVDIFQTVKVLRTQRPAMVQTEDEYQFCFQAALEYLGSFDHYAT.

The N-terminal stretch at 1–29 is a signal peptide; it reads MAPTWSPSVVSVVGPVGLFLVLLARGCLA. The Extracellular segment spans residues 30–1257; it reads EEPPRFIREP…PQPIVDGEEG (1228 aa). 3 consecutive Ig-like C2-type domains span residues 33–123, 135–224, and 232–314; these read PRFI…AKLT, PNID…ANLY, and PRFS…AQIT. Intrachain disulfides connect Cys54/Cys107 and Cys156/Cys207. Residues 68 to 72 form an important for binding to glycosaminoglycan chains region; the sequence is KKGKK. 2 N-linked (GlcNAc...) asparagine glycosylation sites follow: Asn250 and Asn295. Cys253 and Cys298 form a disulfide bridge. 8 consecutive Fibronectin type-III domains span residues 321–411, 416–510, 514–603, 608–705, 710–809, 810–906, 907–1008, and 1011–1095; these read APGT…TGEQ, APRN…TQQG, QPMN…TLQA, PPQD…TDED, PPRK…TKGA, VLGR…APRG, FPQI…LARD, and SPKN…TAFN. The segment covering 691–700 has biased composition (low complexity); sequence PGPESSPVVV. The disordered stretch occupies residues 691-711; it reads PGPESSPVVVRTDEDVPSAPP. An N-linked (GlcNAc...) asparagine glycan is attached at Asn720. N-linked (GlcNAc...) asparagine glycosylation occurs at Asn916. Residues 1258–1278 form a helical membrane-spanning segment; the sequence is LIWVIGPVLAVVFIICIVIAI. At 1279–1907 the chain is on the cytoplasmic side; sequence LLYKNKPDSK…YLGSFDHYAT (629 aa). The span at 1286 to 1296 shows a compositional bias: basic and acidic residues; it reads DSKRKDSEPRT. Residues 1286–1313 are disordered; it reads DSKRKDSEPRTKCLLNNADLAPHHPKDP. Tyrosine-protein phosphatase domains follow at residues 1352-1607 and 1639-1898; these read LSQE…LLEA and MELE…ALEY. Substrate is bound by residues Asp1516, 1548–1554, and Gln1592; that span reads CSAGVGR. The active-site Phosphocysteine intermediate is Cys1548. The active-site Phosphocysteine intermediate is the Cys1839.

It belongs to the protein-tyrosine phosphatase family. Receptor class 2A subfamily. In terms of assembly, binding to large heparan sulfate proteoglycan structures promotes oligomerization. Binding to chondroitin sulfate proteoglycan does not lead to oligomerization. Interacts (via Ig-like domains) with NTRK3. Interacts (via Ig-like domains) with NTRK1, but does not form detectable complexes with NTRK2. Interacts with PPFIA1, PPFIA2 and PPFIA3. In terms of processing, a cleavage occurs, separating the extracellular domain from the transmembrane segment. This process called 'ectodomain shedding' is thought to be involved in receptor desensitization, signal transduction and/or membrane localization. Detected in brain cortex, cerebellum and thoracic spinal cord (at protein level). Detected in motor cortex and white matter of the spinal cord, but not in spinal cord gray matter. Isoform 1 and isoform 6 are predominantly expressed in the brain (cerebrum and cerebellum) and to a lesser extent in the heart and skeletal muscle. Also found in neuronal-derived cell lines. Detected in the ganglion cell layer of the retina and in glial cells along the optic nerve. Detected in bone marrow and spleen plasmacytoid dendritic cells.

Its subcellular location is the cell membrane. The protein resides in the cell projection. The protein localises to the axon. It is found in the perikaryon. It localises to the cytoplasmic vesicle. Its subcellular location is the secretory vesicle. The protein resides in the synaptic vesicle membrane. The protein localises to the synapse. It is found in the synaptosome. It localises to the postsynaptic density. Its subcellular location is the neuron projection. The protein resides in the growth cone. The catalysed reaction is O-phospho-L-tyrosyl-[protein] + H2O = L-tyrosyl-[protein] + phosphate. Functionally, cell surface receptor that binds to glycosaminoglycans, including chondroitin sulfate proteoglycans and heparan sulfate proteoglycans. Binding to chondroitin sulfate and heparan sulfate proteoglycans has opposite effects on PTPRS oligomerization and regulation of neurite outgrowth. Contributes to the inhibition of neurite and axonal outgrowth by chondroitin sulfate proteoglycans, also after nerve transection. Plays a role in stimulating neurite outgrowth in response to the heparan sulfate proteoglycan GPC2. Required for normal brain development, especially for normal development of the pituitary gland and the olfactory bulb. Functions as a tyrosine phosphatase. Mediates dephosphorylation of NTRK1, NTRK2 and NTRK3. Plays a role in down-regulation of signaling cascades that lead to the activation of Akt and MAP kinases. Down-regulates TLR9-mediated activation of NF-kappa-B, as well as production of TNF, interferon alpha and interferon beta. This Mus musculus (Mouse) protein is Receptor-type tyrosine-protein phosphatase S (Ptprs).